The primary structure comprises 1030 residues: Zinc finger and SCAN domain-containing protein 20 (1030 aa).

The segment at 22 to 42 is disordered; sequence DSWGSDSRPEKESHSPVPGPE. An SCAN box domain is found at 45 to 127; the sequence is RRCFRQFRYR…ALVEDWHREA (83 aa). Disordered regions lie at residues 178–201, 213–285, 411–441, and 578–600; these read DLSKMPPESLKESAVLTPQAPTVP, GKSQ…DSAQ, SGGPGEAVALPRLGDSDTEMDDQDEGSWEPE, and TGLPGSGQSSTEADDQEAWGEME. Residues 225–240 are compositionally biased toward basic and acidic residues; that stretch reads AKKEPCQDPAGGDRGD. Composition is skewed to acidic residues over residues 426–441 and 589–600; these read SDTEMDDQDEGSWEPE and EADDQEAWGEME. The C2H2-type 1; degenerate zinc-finger motif lies at 697–719; it reads YGCDTRAKSFSRKVHFFAPQRTH. Residues 725 to 747 form a C2H2-type 2; degenerate zinc finger; the sequence is YKCLGSGKSFSDRANLSTHQRIH. C2H2-type zinc fingers lie at residues 753–775 and 781–803; these read YRCLECGKSFNDPSNLITHQRTH and YKCGLCWKSFNQSSNLLKHQRVH. Disordered stretches follow at residues 801–820 and 828–850; these read RVHLGGPPNQRDEPGENFGQ and WRRNSTQEGPKEPQNISMGADSP. 6 consecutive C2H2-type zinc fingers follow at residues 862–884, 890–912, 918–940, 946–968, 974–996, and 1002–1024; these read YSCPECGRCFSKSSALTSHQRIH, YECAVCGKSFSKSSSLANHRRTH, HKCADCGKCFSERSKLITHQRVH, YECPECGKFFRDRSNLITHQRIH, YKCRECGKCFNQSSSLIIHQRIH, and YKCTECGKDFNNSSHFSAHRRTH.

It belongs to the krueppel C2H2-type zinc-finger protein family.

It is found in the nucleus. In terms of biological role, may be involved in transcriptional regulation. The polypeptide is Zinc finger and SCAN domain-containing protein 20 (Zscan20) (Mus musculus (Mouse)).